Reading from the N-terminus, the 210-residue chain is GTP pyrophosphokinase YwaC (210 aa).

Belongs to the RelA/SpoT family. As to quaternary structure, homotetramer.

The enzyme catalyses GTP + ATP = guanosine 3'-diphosphate 5'-triphosphate + AMP. It participates in purine metabolism; ppGpp biosynthesis; ppGpp from GTP: step 1/2. In terms of biological role, functions as a (p)ppGpp synthase; GDP can be used instead of GTP, resulting in an increase of (p)ppGpp synthesis. Overexpression in relA mutants (triple relA-yjbM-ywaC deletions and single relA deletions) leads to growth arrest; GTP levels fall drastically, various guanine-related nucleotides are synthesized (ppGp or pGpp), the cellular transcriptional profile changes dramatically and 70S ribosome dimerization occurs. Overexpression in the presence of a wild-type relA gene does not have these effects. In eubacteria ppGpp (guanosine 3'-diphosphate 5'-diphosphate) is a mediator of the stringent response that coordinates a variety of cellular activities in response to changes in nutritional abundance. activities in response to changes in nutritional abundance. YwaC has probably a minor role in stringent response. The chain is GTP pyrophosphokinase YwaC (ywaC) from Bacillus subtilis (strain 168).